Reading from the N-terminus, the 403-residue chain is Phosphoglycerate kinase (403 aa).

Substrate contacts are provided by residues 21-23 (DFN), Arg36, 59-62 (HLGR), Arg119, and Arg154. Residues Lys207, Gly299, Glu330, and 357-360 (GGDA) contribute to the ATP site.

This sequence belongs to the phosphoglycerate kinase family. In terms of assembly, monomer.

It is found in the cytoplasm. It carries out the reaction (2R)-3-phosphoglycerate + ATP = (2R)-3-phospho-glyceroyl phosphate + ADP. Its pathway is carbohydrate degradation; glycolysis; pyruvate from D-glyceraldehyde 3-phosphate: step 2/5. The polypeptide is Phosphoglycerate kinase (Chlamydia trachomatis serovar A (strain ATCC VR-571B / DSM 19440 / HAR-13)).